A 375-amino-acid chain; its full sequence is Probable disease resistance protein At1g52660 (375 aa).

The NB-ARC domain maps to 158–372 (ENTGIIGLYG…LSNSPPNFSG (215 aa)). 167 to 174 (GVEGVGKT) provides a ligand contact to ATP.

Possible disease resistance protein. The chain is Probable disease resistance protein At1g52660 from Arabidopsis thaliana (Mouse-ear cress).